Reading from the N-terminus, the 89-residue chain is Small ribosomal subunit protein uS15 (89 aa).

It belongs to the universal ribosomal protein uS15 family. In terms of assembly, part of the 30S ribosomal subunit. Forms a bridge to the 50S subunit in the 70S ribosome, contacting the 23S rRNA.

Functionally, one of the primary rRNA binding proteins, it binds directly to 16S rRNA where it helps nucleate assembly of the platform of the 30S subunit by binding and bridging several RNA helices of the 16S rRNA. In terms of biological role, forms an intersubunit bridge (bridge B4) with the 23S rRNA of the 50S subunit in the ribosome. This is Small ribosomal subunit protein uS15 from Limosilactobacillus fermentum (strain NBRC 3956 / LMG 18251) (Lactobacillus fermentum).